Consider the following 330-residue polypeptide: Aspartate--ammonia ligase (330 aa).

It belongs to the class-II aminoacyl-tRNA synthetase family. AsnA subfamily.

The protein localises to the cytoplasm. It carries out the reaction L-aspartate + NH4(+) + ATP = L-asparagine + AMP + diphosphate + H(+). It functions in the pathway amino-acid biosynthesis; L-asparagine biosynthesis; L-asparagine from L-aspartate (ammonia route): step 1/1. The chain is Aspartate--ammonia ligase from Salmonella schwarzengrund (strain CVM19633).